The sequence spans 346 residues: UDP-3-O-acylglucosamine N-acyltransferase (346 aa).

H240 (proton acceptor) is an active-site residue.

This sequence belongs to the transferase hexapeptide repeat family. LpxD subfamily. As to quaternary structure, homotrimer.

It catalyses the reaction a UDP-3-O-[(3R)-3-hydroxyacyl]-alpha-D-glucosamine + a (3R)-hydroxyacyl-[ACP] = a UDP-2-N,3-O-bis[(3R)-3-hydroxyacyl]-alpha-D-glucosamine + holo-[ACP] + H(+). The protein operates within bacterial outer membrane biogenesis; LPS lipid A biosynthesis. Functionally, catalyzes the N-acylation of UDP-3-O-acylglucosamine using 3-hydroxyacyl-ACP as the acyl donor. Is involved in the biosynthesis of lipid A, a phosphorylated glycolipid that anchors the lipopolysaccharide to the outer membrane of the cell. The protein is UDP-3-O-acylglucosamine N-acyltransferase of Bacteroides fragilis (strain ATCC 25285 / DSM 2151 / CCUG 4856 / JCM 11019 / LMG 10263 / NCTC 9343 / Onslow / VPI 2553 / EN-2).